A 355-amino-acid chain; its full sequence is Protein RecA (355 aa).

ATP is bound at residue 66–73; the sequence is GPESSGKT. Residues 331 to 355 are disordered; sequence DVPEEDLPTTEDEQINILPDDSTEE. A compositionally biased stretch (acidic residues) spans 332 to 344; it reads VPEEDLPTTEDEQ.

It belongs to the RecA family.

The protein resides in the cytoplasm. In terms of biological role, can catalyze the hydrolysis of ATP in the presence of single-stranded DNA, the ATP-dependent uptake of single-stranded DNA by duplex DNA, and the ATP-dependent hybridization of homologous single-stranded DNAs. It interacts with LexA causing its activation and leading to its autocatalytic cleavage. The protein is Protein RecA of Latilactobacillus sakei subsp. sakei (strain 23K) (Lactobacillus sakei subsp. sakei).